The following is a 930-amino-acid chain: Probable outer membrane protein pmp8 (930 aa).

An N-terminal signal peptide occupies residues 1–26; sequence MKIPLHKLLISSTLVTPILLSIATYG. The Autotransporter domain occupies 636 to 930; that stretch reads SIYQQRGLWA…NVDCGLRYSF (295 aa).

This sequence belongs to the PMP outer membrane protein family.

The protein resides in the secreted. It is found in the cell wall. Its subcellular location is the cell outer membrane. The protein is Probable outer membrane protein pmp8 (pmp8) of Chlamydia pneumoniae (Chlamydophila pneumoniae).